A 327-amino-acid polypeptide reads, in one-letter code: L-lactate dehydrogenase (327 aa).

NAD(+) is bound by residues Val-18, Asp-39, Lys-44, Tyr-69, and 83 to 84 (GA). Substrate is bound by residues Gln-86, Arg-92, and 124–127 (NPVD). Residues 122 to 124 (AAN) and Ser-147 contribute to the NAD(+) site. Residue 152 to 155 (DSAR) coordinates substrate. Beta-D-fructose 1,6-bisphosphate-binding residues include Arg-157 and His-172. Catalysis depends on His-179, which acts as the Proton acceptor. The residue at position 224 (Tyr-224) is a Phosphotyrosine. Thr-233 serves as a coordination point for substrate.

It belongs to the LDH/MDH superfamily. LDH family. Homotetramer.

The protein localises to the cytoplasm. It catalyses the reaction (S)-lactate + NAD(+) = pyruvate + NADH + H(+). Its pathway is fermentation; pyruvate fermentation to lactate; (S)-lactate from pyruvate: step 1/1. With respect to regulation, allosterically activated by fructose 1,6-bisphosphate (FBP). Its function is as follows. Catalyzes the conversion of lactate to pyruvate. This is L-lactate dehydrogenase from Streptococcus equi subsp. equi (strain 4047).